The following is a 371-amino-acid chain: 3-isopropylmalate dehydrogenase (371 aa).

The residue at position 55 (Thr-55) is a Phosphothreonine. Gly-78–Glu-89 contacts NAD(+). Positions 96, 106, 135, and 224 each coordinate substrate. Mg(2+)-binding residues include Asp-224, Asp-249, and Asp-253. Gly-290 to Asn-302 is a binding site for NAD(+).

It belongs to the isocitrate and isopropylmalate dehydrogenases family. As to quaternary structure, homodimer. Requires Mg(2+) as cofactor. Mn(2+) is required as a cofactor.

Its subcellular location is the cytoplasm. The enzyme catalyses (2R,3S)-3-isopropylmalate + NAD(+) = 4-methyl-2-oxopentanoate + CO2 + NADH. It functions in the pathway amino-acid biosynthesis; L-leucine biosynthesis; L-leucine from 3-methyl-2-oxobutanoate: step 3/4. Its function is as follows. Catalyzes the oxidation of 3-carboxy-2-hydroxy-4-methylpentanoate (3-isopropylmalate) to 3-carboxy-4-methyl-2-oxopentanoate. The product decarboxylates to 4-methyl-2 oxopentanoate. The protein is 3-isopropylmalate dehydrogenase (leu1) of Schizosaccharomyces pombe (strain 972 / ATCC 24843) (Fission yeast).